Reading from the N-terminus, the 906-residue chain is Toll-like receptor 12 (906 aa).

An N-terminal signal peptide occupies residues 1–21; the sequence is MGRYWLLPGLLLSLPLVTGWS. Residues 22–709 lie on the Extracellular side of the membrane; that stretch reads TSNCLVTEGS…DHCPQTLELK (688 aa). The N-linked (GlcNAc...) asparagine glycan is linked to Asn-59. LRR repeat units lie at residues 91 to 114, 115 to 140, 142 to 170, 198 to 222, 224 to 247, 267 to 290, 291 to 314, 316 to 338, 341 to 364, 366 to 388, 389 to 412, 414 to 436, 462 to 484, 485 to 508, and 510 to 533; these read FPGL…LRGL, GQLQ…AFSD, ISLQ…QWLG, SWTL…SLQG, QVEI…GLQK, HFEL…ALAS, CHSL…FLTA, PRLQ…MNET, VSGL…AFSC, PHLR…LFQE, LQQL…WLAA, PALT…GFWG, LTSL…PAIF, PSLE…NASG, and FPAL…GTSN. Asn-336 is a glycosylation site (N-linked (GlcNAc...) asparagine). N-linked (GlcNAc...) asparagine glycosylation is present at Asn-505. Asn-552 carries an N-linked (GlcNAc...) asparagine glycan. LRR repeat units lie at residues 562 to 586 and 591 to 614; these read LPSL…QLEE and LPQL…AFQR. The chain crosses the membrane as a helical span at residues 710–730; that stretch reads LFLASSALVFMLIALPLLQEA. The Cytoplasmic portion of the chain corresponds to 731–906; sequence RNSWIPYLQA…FWTWLRSRLG (176 aa). Residues 759–905 form the TIR domain; the sequence is FLFDVFVSHC…GFWTWLRSRL (147 aa).

The protein belongs to the Toll-like receptor family. Binds MYD88 via their respective TIR domains. As to expression, macrophages, liver, kidney and bladder epithelial cells.

The protein localises to the membrane. Its function is as follows. Participates in the innate immune response to microbial agents. Acts via MYD88 and TRAF6, leading to NF-kappa-B activation, cytokine secretion and the inflammatory response. Plays a role in preventing infection of internal organs of the urogenital system. The chain is Toll-like receptor 12 from Mus musculus (Mouse).